Here is a 313-residue protein sequence, read N- to C-terminus: WD repeat-containing protein 82-A (313 aa).

6 WD repeats span residues 19 to 58 (ENSDKINCFDFSPTGETVISSSDDDSIVLYDCQEGKPKRT), 105 to 144 (GHSKRVVALSMSPVDDTFISASLDKTIRLWDLRSPNCQGL), 146 to 184 (HLQGKPVCSFDPEGLIFAAGVNSEMVKLYDLRSFDKGPF), 192 to 231 (DRTCEWTSLKFSQDGKLILMSTNGGFLRLVDAFKGAVMHT), 236 to 276 (NNSK…KVAV), and 280 to 313 (KHTGPITCLQFNPKFMTFASACSNMAFWLPTIDD).

This sequence belongs to the WD repeat SWD2 family. As to quaternary structure, component of the SET1/COMPASS complex. Component of the PNUTS-PP1 phosphatase complex.

It is found in the nucleus. Its subcellular location is the chromosome. The protein localises to the cytoplasm. Regulatory component of the SET1/COMPASS complex implicated in the tethering of this complex to transcriptional start sites of active genes. Facilitates histone H3 'Lys-4' methylation (H3K4me) via recruitment of the SETD1A or SETD1B to the 'Ser-5' phosphorylated C-terminal domain (CTD) of RNA polymerase II large subunit (POLR2A). Component of the PNUTS-PP1 protein phosphatase complex, a protein phosphatase 1 (PP1) complex that promotes RNA polymerase II transcription pause-release, allowing transcription elongation. This Xenopus laevis (African clawed frog) protein is WD repeat-containing protein 82-A (wdr82-a).